We begin with the raw amino-acid sequence, 100 residues long: uncharacterized protein (100 aa).

The protein resides in the secreted. This is an uncharacterized protein from Mycobacterium leprae (strain TN).